The sequence spans 514 residues: Coiled-coil domain-containing protein 174 (514 aa).

2 disordered regions span residues 42 to 83 and 137 to 162; these read AKPK…DQSR and TLEKETDDEEIEPEMEIPPPEDPDEE. Residues 63–83 show a composition bias toward basic and acidic residues; that stretch reads KRAEKDIEQKAEEDQTLDQSR. A coiled-coil region spans residues 66–98; it reads EKDIEQKAEEDQTLDQSRKKLEEKAKLYEKMTK. Residues 141 to 162 show a composition bias toward acidic residues; that stretch reads ETDDEEIEPEMEIPPPEDPDEE. 2 coiled-coil regions span residues 203–227 and 266–321; these read LLSEDMKRELQRQQWEKEEEEALRK and LDML…LENG. Disordered stretches follow at residues 270–291 and 306–490; these read REQTLDQRTKREQLKEKRKAAL and LREE…PSAH. Basic and acidic residues-rich tracts occupy residues 335 to 354 and 376 to 388; these read EVPRPSRKVEVVIQERRDTK and KKQEELRDERDPE. Residues 405 to 418 are compositionally biased toward polar residues; sequence YSSQNLNSPETSPG. Residues 420–429 show a composition bias toward basic and acidic residues; the sequence is TEPEISENQK.

Its subcellular location is the nucleus. Functionally, probably involved in neuronal development. The protein is Coiled-coil domain-containing protein 174 (CCDC174) of Gallus gallus (Chicken).